The sequence spans 196 residues: ATP-dependent Clp protease proteolytic subunit (196 aa).

S101 functions as the Nucleophile in the catalytic mechanism. Residue H126 is part of the active site.

Belongs to the peptidase S14 family. As to quaternary structure, component of the chloroplastic Clp protease core complex.

The protein resides in the plastid. The protein localises to the chloroplast stroma. The enzyme catalyses Hydrolysis of proteins to small peptides in the presence of ATP and magnesium. alpha-casein is the usual test substrate. In the absence of ATP, only oligopeptides shorter than five residues are hydrolyzed (such as succinyl-Leu-Tyr-|-NHMec, and Leu-Tyr-Leu-|-Tyr-Trp, in which cleavage of the -Tyr-|-Leu- and -Tyr-|-Trp bonds also occurs).. Cleaves peptides in various proteins in a process that requires ATP hydrolysis. Has a chymotrypsin-like activity. Plays a major role in the degradation of misfolded proteins. The polypeptide is ATP-dependent Clp protease proteolytic subunit (Eucalyptus globulus subsp. globulus (Tasmanian blue gum)).